Consider the following 328-residue polypeptide: UDP-glucose 4-epimerase (328 aa).

Threonine 119 serves as a coordination point for substrate. Catalysis depends on tyrosine 143, which acts as the Proton acceptor.

The protein belongs to the NAD(P)-dependent epimerase/dehydratase family. The cofactor is NAD(+).

It carries out the reaction UDP-alpha-D-glucose = UDP-alpha-D-galactose. The protein operates within carbohydrate metabolism; galactose metabolism. Its pathway is glycan metabolism; exopolysaccharide biosynthesis. The protein is UDP-glucose 4-epimerase (exoB) of Rhizobium meliloti (strain 1021) (Ensifer meliloti).